The sequence spans 485 residues: GTPase Obg (485 aa).

One can recognise an Obg domain in the interval 1–159; the sequence is MKFVDEVRIF…LTLRLELKLL (159 aa). Residues 160–332 form the OBG-type G domain; that stretch reads ADVGLLGFPN…LMDSVAEVLF (173 aa). GTP-binding positions include 166 to 173, 191 to 195, 213 to 216, 284 to 287, and 313 to 315; these read GFPNAGKS, FTTLV, DIPG, NKLD, and SCA. 2 residues coordinate Mg(2+): Ser173 and Thr193. Composition is skewed to low complexity over residues 367–385, 394–428, 437–446, and 455–474; these read AGAA…AAKK, RKAG…PVKK, RKSGTAPAKK, and RKSG…ATKR. The interval 367 to 485 is disordered; it reads AGAAAATKSA…PARKSGGGRS (119 aa).

The protein belongs to the TRAFAC class OBG-HflX-like GTPase superfamily. OBG GTPase family. As to quaternary structure, monomer. Mg(2+) is required as a cofactor.

The protein localises to the cytoplasm. An essential GTPase which binds GTP, GDP and possibly (p)ppGpp with moderate affinity, with high nucleotide exchange rates and a fairly low GTP hydrolysis rate. Plays a role in control of the cell cycle, stress response, ribosome biogenesis and in those bacteria that undergo differentiation, in morphogenesis control. The polypeptide is GTPase Obg (Myxococcus xanthus (strain DK1622)).